A 186-amino-acid polypeptide reads, in one-letter code: Elongation factor P (186 aa).

It belongs to the elongation factor P family.

It localises to the cytoplasm. It functions in the pathway protein biosynthesis; polypeptide chain elongation. Involved in peptide bond synthesis. Stimulates efficient translation and peptide-bond synthesis on native or reconstituted 70S ribosomes in vitro. Probably functions indirectly by altering the affinity of the ribosome for aminoacyl-tRNA, thus increasing their reactivity as acceptors for peptidyl transferase. The chain is Elongation factor P from Shewanella baltica (strain OS223).